We begin with the raw amino-acid sequence, 142 residues long: Large ribosomal subunit protein uL11 (142 aa).

Belongs to the universal ribosomal protein uL11 family. In terms of assembly, part of the ribosomal stalk of the 50S ribosomal subunit. Interacts with L10 and the large rRNA to form the base of the stalk. L10 forms an elongated spine to which L12 dimers bind in a sequential fashion forming a multimeric L10(L12)X complex. One or more lysine residues are methylated.

In terms of biological role, forms part of the ribosomal stalk which helps the ribosome interact with GTP-bound translation factors. The chain is Large ribosomal subunit protein uL11 from Pseudoalteromonas atlantica (strain T6c / ATCC BAA-1087).